Consider the following 313-residue polypeptide: T-box protein 37 (313 aa).

Positions 19 to 195 form a DNA-binding region, T-box; sequence IWEKFYPKTE…HNKFASGFRS (177 aa). Residues 193–228 form a disordered region; that stretch reads FRSNGKRRLSSESENSENSPPKRSASAISSLTPPAI.

Its subcellular location is the nucleus. Its function is as follows. Transcription factor. Required for mesodermal induction, acting redundantly with transcription factor tbx-38. Together with tbx-38, acts by inducing cell fates in the AB lineage, thereby playing a role in development of the anterior pharynx. The protein is T-box protein 37 (tbx-37) of Caenorhabditis elegans.